We begin with the raw amino-acid sequence, 430 residues long: Serine--tRNA ligase (430 aa).

Residue threonine 237 to glutamate 239 participates in L-serine binding. Position 268–270 (arginine 268–glutamate 270) interacts with ATP. Glutamate 291 serves as a coordination point for L-serine. Residue glutamate 355–serine 358 participates in ATP binding. Serine 391 provides a ligand contact to L-serine.

Belongs to the class-II aminoacyl-tRNA synthetase family. Type-1 seryl-tRNA synthetase subfamily. As to quaternary structure, homodimer. The tRNA molecule binds across the dimer.

It localises to the cytoplasm. The catalysed reaction is tRNA(Ser) + L-serine + ATP = L-seryl-tRNA(Ser) + AMP + diphosphate + H(+). The enzyme catalyses tRNA(Sec) + L-serine + ATP = L-seryl-tRNA(Sec) + AMP + diphosphate + H(+). It functions in the pathway aminoacyl-tRNA biosynthesis; selenocysteinyl-tRNA(Sec) biosynthesis; L-seryl-tRNA(Sec) from L-serine and tRNA(Sec): step 1/1. In terms of biological role, catalyzes the attachment of serine to tRNA(Ser). Is also able to aminoacylate tRNA(Sec) with serine, to form the misacylated tRNA L-seryl-tRNA(Sec), which will be further converted into selenocysteinyl-tRNA(Sec). This Salmonella enteritidis PT4 (strain P125109) protein is Serine--tRNA ligase.